A 249-amino-acid chain; its full sequence is DNA repair protein RecO (249 aa).

The protein belongs to the RecO family.

In terms of biological role, involved in DNA repair and RecF pathway recombination. The polypeptide is DNA repair protein RecO (Lactobacillus delbrueckii subsp. bulgaricus (strain ATCC BAA-365 / Lb-18)).